The following is a 419-amino-acid chain: Putative Bro-N domain-containing protein 201R (419 aa).

The Bro-N domain maps to 4-136; sequence LINLKDCKEY…KILPSIRKYG (133 aa). Positions 150-195 form a coiled coil; that stretch reads QLALKDKSEEELQIKLQEERIEKENAYMKLRSEAKRHKEQIKRTLE.

The protein belongs to the IIV-6 201R/289L family.

In Acheta domesticus (House cricket), this protein is Putative Bro-N domain-containing protein 201R.